The sequence spans 1091 residues: Voltage-dependent calcium channel subunit alpha-2/delta-3 (1091 aa).

An N-terminal signal peptide occupies residues 1–28 (MAGPGSPRRASRGASALLAAALLYAALG). At 29-1068 (DVVRSEQQIP…HPEENARECG (1040 aa)) the chain is on the extracellular side. Residue Asn-166 is glycosylated (N-linked (GlcNAc...) asparagine). The VWFA domain occupies 256 to 438 (DVVILVDVSG…ENVMEYLHVL (183 aa)). The a divalent metal cation site is built by Asp-262, Ser-264, and Ser-266. The MIDAS-like motif motif lies at 262–266 (DVSGS). Asn-309 carries an N-linked (GlcNAc...) asparagine glycan. The cysteines at positions 412 and 1055 are disulfide-linked. The Cache domain occupies 452–549 (WTEAYIDSTL…RLLYEEGKKR (98 aa)). N-linked (GlcNAc...) asparagine glycosylation is found at Asn-553, Asn-632, and Asn-793. At Tyr-924 the chain carries Phosphotyrosine. Residues 1069 to 1089 (GAPSLQAQTVLLLLPLLLMLF) form a helical membrane-spanning segment. Over 1090-1091 (SR) the chain is Cytoplasmic.

The protein belongs to the calcium channel subunit alpha-2/delta family. As to quaternary structure, dimer formed of alpha-2-2 and delta-2 chains; disulfide-linked. Voltage-dependent calcium channels are multisubunit complexes, consisting of alpha-1 (CACNA1), alpha-2 (CACNA2D), beta (CACNB) and delta (CACNA2D) subunits in a 1:1:1:1 ratio. N-glycosylated. In terms of processing, may be proteolytically processed into subunits alpha-2-3 and delta-3 that are disulfide-linked. It is however unclear whether such cleavage really takes place in vivo and has a functional role. Only detected in brain. Not present in lung, testis, aorta, spleen, jejunum, ventricular muscle and kidney (at protein level). According to PubMed:11687876, it is brain-specific, while according to PubMed:11245980, it is widely expressed.

Its subcellular location is the membrane. The alpha-2/delta subunit of voltage-dependent calcium channels regulates calcium current density and activation/inactivation kinetics of the calcium channel. Acts as a regulatory subunit for P/Q-type calcium channel (CACNA1A), N-type (CACNA1B), L-type (CACNA1C OR CACNA1D) but not T-type (CACNA1G). This Homo sapiens (Human) protein is Voltage-dependent calcium channel subunit alpha-2/delta-3 (CACNA2D3).